Consider the following 350-residue polypeptide: Cell division protein ZipA (350 aa).

At 1–6 (MEDLQL) the chain is on the periplasmic side. Residues 7 to 27 (VLFVLGAIAIVAVLVHGFWSI) traverse the membrane as a helical segment. The Cytoplasmic portion of the chain corresponds to 28-350 (RKQQPRTIKE…QYLARIRANA (323 aa)). 3 disordered regions span residues 36 to 55 (KEQP…AEGF), 65 to 136 (VRKL…PSAR), and 187 to 213 (RVPA…EEPL). Basic and acidic residues-rich tracts occupy residues 65–109 (VRKL…ESRA) and 116–131 (AAHE…HEEP).

This sequence belongs to the ZipA family. Interacts with FtsZ via their C-terminal domains.

Its subcellular location is the cell inner membrane. In terms of biological role, essential cell division protein that stabilizes the FtsZ protofilaments by cross-linking them and that serves as a cytoplasmic membrane anchor for the Z ring. Also required for the recruitment to the septal ring of downstream cell division proteins. The protein is Cell division protein ZipA of Shewanella amazonensis (strain ATCC BAA-1098 / SB2B).